The sequence spans 116 residues: NADH-ubiquinone oxidoreductase chain 3 (116 aa).

The next 3 helical transmembrane spans lie at 10-30 (FLTL…TFAA), 64-84 (FFLV…LFPL), and 88-108 (VFFH…FEWV).

Belongs to the complex I subunit 3 family.

Its subcellular location is the mitochondrion membrane. It catalyses the reaction a ubiquinone + NADH + 5 H(+)(in) = a ubiquinol + NAD(+) + 4 H(+)(out). Functionally, core subunit of the mitochondrial membrane respiratory chain NADH dehydrogenase (Complex I) that is believed to belong to the minimal assembly required for catalysis. Complex I functions in the transfer of electrons from NADH to the respiratory chain. The immediate electron acceptor for the enzyme is believed to be ubiquinone. The polypeptide is NADH-ubiquinone oxidoreductase chain 3 (ND3) (Patiria pectinifera (Starfish)).